The sequence spans 154 residues: Large ribosomal subunit protein uL23y (154 aa).

The protein belongs to the universal ribosomal protein uL23 family.

Binds to a specific region on the 26S rRNA. In Arabidopsis thaliana (Mouse-ear cress), this protein is Large ribosomal subunit protein uL23y (RPL23AB).